We begin with the raw amino-acid sequence, 529 residues long: Peptide chain release factor 3 (529 aa).

One can recognise a tr-type G domain in the interval 11-280 (ARRRTFAIIS…GLVEWAPSPM (270 aa)). Residues 20-27 (SHPDAGKT), 88-92 (DTPGH), and 142-145 (NKLD) contribute to the GTP site.

This sequence belongs to the TRAFAC class translation factor GTPase superfamily. Classic translation factor GTPase family. PrfC subfamily.

It localises to the cytoplasm. Increases the formation of ribosomal termination complexes and stimulates activities of RF-1 and RF-2. It binds guanine nucleotides and has strong preference for UGA stop codons. It may interact directly with the ribosome. The stimulation of RF-1 and RF-2 is significantly reduced by GTP and GDP, but not by GMP. The sequence is that of Peptide chain release factor 3 from Erwinia tasmaniensis (strain DSM 17950 / CFBP 7177 / CIP 109463 / NCPPB 4357 / Et1/99).